Consider the following 406-residue polypeptide: Dual-specificity RNA methyltransferase RlmN (406 aa).

Glu-119 (proton acceptor) is an active-site residue. Residues 125 to 370 (DKGRGTLCVS…AMVRRTRGDD (246 aa)) form the Radical SAM core domain. Cys-132 and Cys-375 are oxidised to a cystine. 3 residues coordinate [4Fe-4S] cluster: Cys-139, Cys-143, and Cys-146. S-adenosyl-L-methionine-binding positions include 192–193 (GE), Ser-224, 246–248 (SLH), and Asn-332. Residue Cys-375 is the S-methylcysteine intermediate of the active site.

It belongs to the radical SAM superfamily. RlmN family. [4Fe-4S] cluster serves as cofactor.

The protein localises to the cytoplasm. It carries out the reaction adenosine(2503) in 23S rRNA + 2 reduced [2Fe-2S]-[ferredoxin] + 2 S-adenosyl-L-methionine = 2-methyladenosine(2503) in 23S rRNA + 5'-deoxyadenosine + L-methionine + 2 oxidized [2Fe-2S]-[ferredoxin] + S-adenosyl-L-homocysteine. It catalyses the reaction adenosine(37) in tRNA + 2 reduced [2Fe-2S]-[ferredoxin] + 2 S-adenosyl-L-methionine = 2-methyladenosine(37) in tRNA + 5'-deoxyadenosine + L-methionine + 2 oxidized [2Fe-2S]-[ferredoxin] + S-adenosyl-L-homocysteine. Functionally, specifically methylates position 2 of adenine 2503 in 23S rRNA and position 2 of adenine 37 in tRNAs. m2A2503 modification seems to play a crucial role in the proofreading step occurring at the peptidyl transferase center and thus would serve to optimize ribosomal fidelity. The chain is Dual-specificity RNA methyltransferase RlmN from Xylella fastidiosa (strain M12).